A 452-amino-acid polypeptide reads, in one-letter code: UPF0210 protein Csac_1314 (452 aa).

It belongs to the UPF0210 family. In terms of assembly, homodimer.

This Caldicellulosiruptor saccharolyticus (strain ATCC 43494 / DSM 8903 / Tp8T 6331) protein is UPF0210 protein Csac_1314.